The following is a 180-amino-acid chain: Large ribosomal subunit protein uL5 (180 aa).

The protein belongs to the universal ribosomal protein uL5 family. Part of the 50S ribosomal subunit; part of the 5S rRNA/L5/L18/L25 subcomplex. Contacts the 5S rRNA and the P site tRNA. Forms a bridge to the 30S subunit in the 70S ribosome.

In terms of biological role, this is one of the proteins that bind and probably mediate the attachment of the 5S RNA into the large ribosomal subunit, where it forms part of the central protuberance. In the 70S ribosome it contacts protein S13 of the 30S subunit (bridge B1b), connecting the 2 subunits; this bridge is implicated in subunit movement. Contacts the P site tRNA; the 5S rRNA and some of its associated proteins might help stabilize positioning of ribosome-bound tRNAs. The protein is Large ribosomal subunit protein uL5 of Lactobacillus delbrueckii subsp. bulgaricus (strain ATCC 11842 / DSM 20081 / BCRC 10696 / JCM 1002 / NBRC 13953 / NCIMB 11778 / NCTC 12712 / WDCM 00102 / Lb 14).